The primary structure comprises 472 residues: Ulvan lyase (472 aa).

Positions 1–21 (MIIKQYLLKISLCVLLLGCDS) are cleaved as a signal peptide. Positions 46 and 109 each coordinate substrate. Catalysis depends on His110, which acts as the Proton donor. Substrate is bound by residues Lys112 and His130. The active-site Proton acceptor is the Tyr175. The substrate site is built by Arg191, His195, and Tyr233. His195 provides a ligand contact to Zn(2+). Zn(2+) contacts are provided by His251, Cys253, and His265. Residue His265 coordinates substrate.

The protein belongs to the polysaccharide lyase 25 family.

In terms of biological role, ulvan lyase involved in ulvan degradation. Ulvan is the main polysaccharide component of the Ulvales (green seaweed) cell wall. It is composed of disaccharide building blocks comprising 3-sulfated rhamnose (Rha3S) linked to D-glucuronic acid (GlcA), L-iduronic acid (IduA), or D-xylose (Xyl). Ulvan lyase catalyzes the endolytic cleavage of the glycosidic bond between Rha3S and the uronic acids GlcA or IduA, producing oligosaccharides that have unsaturated 4-deoxy-L-threo-hex-4-enopyranosiduronic acid (deltaUA) at the non-reducing end. This results eventually in the degradation of the ulvan polysaccharide into deltaUA-Rha3S disaccharides and deltaUA-Rha3S-Xyl-Rha3S tetrasaccharides. The protein is Ulvan lyase of Nonlabens ulvanivorans (Persicivirga ulvanivorans).